A 367-amino-acid polypeptide reads, in one-letter code: bZIP transcription factor 18 (367 aa).

Residues 1-57 form a disordered region; that stretch reads MEDPSNPQPNQSNLSQCPPLATAPTPAPVRGPYHRRAHSEVQFRLPEDLDLSEPFGG. Over residues 38-47 the composition is skewed to basic and acidic residues; that stretch reads HSEVQFRLPE. Residue Ser-70 is modified to Phosphoserine. Positions 79-124 are disordered; the sequence is SGSGSASDSAGPSAPRSDNPFSAENGGAEAGNSRPRHRHSLSVDGS. Residues 82–96 are compositionally biased toward low complexity; sequence GSASDSAGPSAPRSD. The bZIP domain occupies 148-211; it reads DPKRAKRIIA…TGLSSENTEL (64 aa). The segment at 150–171 is basic motif; that stretch reads KRAKRIIANRQSAARSKERKAR. Positions 166–245 form a coiled coil; the sequence is KERKARYILE…VERLKFATGE (80 aa). Residues 176–190 are leucine-zipper; it reads LERKVQTLQTEATTL. Composition is skewed to polar residues over residues 294–309, 317–328, and 354–367; these read QPNN…NPPT, ATSNAPAQSHSY, and FGRS…SSTM. Disordered regions lie at residues 294–330 and 343–367; these read QPNN…SYSE and LDIS…SSTM.

In terms of assembly, interacts with NEAP1. Forms homodimer and heterodimer with bZIP34 and bZIP61. In terms of tissue distribution, ubiquitous. Strongly expressed in mature pollen.

The protein localises to the nucleus. The protein resides in the nucleoplasm. It is found in the cytoplasm. Its subcellular location is the perinuclear region. Its function is as follows. Transcription factor that may participate with bZIP34 in the gametophytic control of pollen development. In Arabidopsis thaliana (Mouse-ear cress), this protein is bZIP transcription factor 18.